The chain runs to 323 residues: tRNA U34 carboxymethyltransferase (323 aa).

Carboxy-S-adenosyl-L-methionine contacts are provided by residues Lys-91, Trp-105, Lys-110, Gly-130, 152–154, 181–182, Met-196, Tyr-200, and Arg-315; these read DPT and IE.

The protein belongs to the class I-like SAM-binding methyltransferase superfamily. CmoB family. In terms of assembly, homotetramer.

It catalyses the reaction carboxy-S-adenosyl-L-methionine + 5-hydroxyuridine(34) in tRNA = 5-carboxymethoxyuridine(34) in tRNA + S-adenosyl-L-homocysteine + H(+). Its function is as follows. Catalyzes carboxymethyl transfer from carboxy-S-adenosyl-L-methionine (Cx-SAM) to 5-hydroxyuridine (ho5U) to form 5-carboxymethoxyuridine (cmo5U) at position 34 in tRNAs. The polypeptide is tRNA U34 carboxymethyltransferase (Salmonella agona (strain SL483)).